The sequence spans 508 residues: Photosystem II CP47 reaction center protein (508 aa).

6 helical membrane-spanning segments follow: residues Ala-21 to Ser-36, Ile-101 to Trp-115, Gly-140 to Phe-156, Ile-203 to Ser-218, Val-237 to Val-252, and Ile-457 to Arg-472.

This sequence belongs to the PsbB/PsbC family. PsbB subfamily. In terms of assembly, PSII is composed of 1 copy each of membrane proteins PsbA, PsbB, PsbC, PsbD, PsbE, PsbF, PsbH, PsbI, PsbJ, PsbK, PsbL, PsbM, PsbT, PsbY, PsbZ, Psb30/Ycf12, at least 3 peripheral proteins of the oxygen-evolving complex and a large number of cofactors. It forms dimeric complexes. The cofactor is Binds multiple chlorophylls. PSII binds additional chlorophylls, carotenoids and specific lipids..

It is found in the plastid. The protein localises to the chloroplast thylakoid membrane. One of the components of the core complex of photosystem II (PSII). It binds chlorophyll and helps catalyze the primary light-induced photochemical processes of PSII. PSII is a light-driven water:plastoquinone oxidoreductase, using light energy to abstract electrons from H(2)O, generating O(2) and a proton gradient subsequently used for ATP formation. This Bigelowiella natans (Pedinomonas minutissima) protein is Photosystem II CP47 reaction center protein.